Consider the following 108-residue polypeptide: Small ribosomal subunit protein mS33 (108 aa).

Positions 84–108 (LRARDKGAPKKKRTAPSAADAKKKK) are disordered.

This sequence belongs to the mitochondrion-specific ribosomal protein mS33 family. As to quaternary structure, component of the mitochondrial small ribosomal subunit (mt-SSU). Mature N.crassa 74S mitochondrial ribosomes consist of a small (37S) and a large (54S) subunit. The 37S small subunit contains a 16S ribosomal RNA (16S mt-rRNA) and 32 different proteins. The 54S large subunit contains a 23S rRNA (23S mt-rRNA) and 42 different proteins.

It is found in the mitochondrion. In terms of biological role, component of the mitochondrial ribosome (mitoribosome), a dedicated translation machinery responsible for the synthesis of mitochondrial genome-encoded proteins, including at least some of the essential transmembrane subunits of the mitochondrial respiratory chain. The mitoribosomes are attached to the mitochondrial inner membrane and translation products are cotranslationally integrated into the membrane. The protein is Small ribosomal subunit protein mS33 (rsm27) of Neurospora crassa (strain ATCC 24698 / 74-OR23-1A / CBS 708.71 / DSM 1257 / FGSC 987).